The following is a 320-amino-acid chain: Foldase protein PrsA (320 aa).

The signal sequence occupies residues 1-20 (MKMINKLIVPVTASALLLGA). Residue C21 is the site of N-palmitoyl cysteine attachment. A lipid anchor (S-diacylglycerol cysteine) is attached at C21. One can recognise a PpiC domain in the interval 139 to 245 (EDSKKASHIL…FGYHIIKADK (107 aa)). Positions 159 to 198 (EGLDDKEAKQKAEEIQKEVSKDPSKFGEIAKKESMDTGSA) are disordered.

This sequence belongs to the PrsA family.

Its subcellular location is the cell membrane. It catalyses the reaction [protein]-peptidylproline (omega=180) = [protein]-peptidylproline (omega=0). Its function is as follows. Plays a major role in protein secretion by helping the post-translocational extracellular folding of several secreted proteins. The chain is Foldase protein PrsA from Staphylococcus aureus (strain bovine RF122 / ET3-1).